The following is a 274-amino-acid chain: Large ribosomal subunit protein uL2 (274 aa).

2 disordered regions span residues 40-59 and 223-274; these read SGGRNNLGRVTRRHQGGGHK and VAMN…RRSR. 2 stretches are compositionally biased toward basic residues: residues 49–59 and 256–274; these read VTRRHQGGGHK and YRTRRNKRTSNMIVRRRSR.

Belongs to the universal ribosomal protein uL2 family. Part of the 50S ribosomal subunit. Forms a bridge to the 30S subunit in the 70S ribosome.

Its function is as follows. One of the primary rRNA binding proteins. Required for association of the 30S and 50S subunits to form the 70S ribosome, for tRNA binding and peptide bond formation. It has been suggested to have peptidyltransferase activity; this is somewhat controversial. Makes several contacts with the 16S rRNA in the 70S ribosome. This Acidithiobacillus ferrooxidans (strain ATCC 23270 / DSM 14882 / CIP 104768 / NCIMB 8455) (Ferrobacillus ferrooxidans (strain ATCC 23270)) protein is Large ribosomal subunit protein uL2.